The following is a 424-amino-acid chain: Riboflavin biosynthesis protein RibBA (424 aa).

A DHBP synthase region spans residues 1–206 (MFTCEAGIAS…VDDLITYRYT (206 aa)). Residues 32–33 (RE), aspartate 37, 145–149 (RPGHT), and glutamate 169 contribute to the D-ribulose 5-phosphate site. Glutamate 33 is a Mg(2+) binding site. Histidine 148 serves as a coordination point for Mg(2+). Positions 207–424 (YDSLVTKISS…YETVERMSCR (218 aa)) are GTP cyclohydrolase II. GTP is bound at residue 257-261 (RVHSE). Zn(2+)-binding residues include cysteine 262, cysteine 273, and cysteine 275. GTP-binding positions include glutamine 278, 301–303 (EGR), and threonine 323. Aspartate 335 (proton acceptor; for GTP cyclohydrolase activity) is an active-site residue. The active-site Nucleophile; for GTP cyclohydrolase activity is arginine 337. Threonine 358 and lysine 363 together coordinate GTP.

It in the N-terminal section; belongs to the DHBP synthase family. This sequence in the C-terminal section; belongs to the GTP cyclohydrolase II family. It depends on Mg(2+) as a cofactor. Requires Mn(2+) as cofactor. The cofactor is Zn(2+).

The catalysed reaction is D-ribulose 5-phosphate = (2S)-2-hydroxy-3-oxobutyl phosphate + formate + H(+). It carries out the reaction GTP + 4 H2O = 2,5-diamino-6-hydroxy-4-(5-phosphoribosylamino)-pyrimidine + formate + 2 phosphate + 3 H(+). It participates in cofactor biosynthesis; riboflavin biosynthesis; 2-hydroxy-3-oxobutyl phosphate from D-ribulose 5-phosphate: step 1/1. Its pathway is cofactor biosynthesis; riboflavin biosynthesis; 5-amino-6-(D-ribitylamino)uracil from GTP: step 1/4. Its function is as follows. Catalyzes the conversion of D-ribulose 5-phosphate to formate and 3,4-dihydroxy-2-butanone 4-phosphate. Catalyzes the conversion of GTP to 2,5-diamino-6-ribosylamino-4(3H)-pyrimidinone 5'-phosphate (DARP), formate and pyrophosphate. In Chlamydia trachomatis serovar D (strain ATCC VR-885 / DSM 19411 / UW-3/Cx), this protein is Riboflavin biosynthesis protein RibBA.